Reading from the N-terminus, the 275-residue chain is NH(3)-dependent NAD(+) synthetase (275 aa).

46-53 lines the ATP pocket; sequence GISGGQDS. Residue Asp-52 coordinates Mg(2+). Arg-140 contributes to the deamido-NAD(+) binding site. ATP is bound at residue Thr-160. Mg(2+) is bound at residue Glu-165. Deamido-NAD(+)-binding residues include Lys-173 and Asp-180. ATP-binding residues include Lys-189 and Thr-211. Position 260 to 261 (260 to 261) interacts with deamido-NAD(+); it reads HK.

It belongs to the NAD synthetase family. As to quaternary structure, homodimer.

The enzyme catalyses deamido-NAD(+) + NH4(+) + ATP = AMP + diphosphate + NAD(+) + H(+). The protein operates within cofactor biosynthesis; NAD(+) biosynthesis; NAD(+) from deamido-NAD(+) (ammonia route): step 1/1. In terms of biological role, catalyzes the ATP-dependent amidation of deamido-NAD to form NAD. Uses ammonia as a nitrogen source. The protein is NH(3)-dependent NAD(+) synthetase of Escherichia coli (strain K12 / MC4100 / BW2952).